A 177-amino-acid chain; its full sequence is Alkyl hydroperoxide reductase AhpD (177 aa).

The Proton donor role is filled by C133. A disulfide bond links C133 and C136. The active-site Cysteine sulfenic acid (-SOH) intermediate is the C136.

This sequence belongs to the AhpD family.

The enzyme catalyses N(6)-[(R)-dihydrolipoyl]-L-lysyl-[lipoyl-carrier protein] + a hydroperoxide = N(6)-[(R)-lipoyl]-L-lysyl-[lipoyl-carrier protein] + an alcohol + H2O. Functionally, antioxidant protein with alkyl hydroperoxidase activity. Required for the reduction of the AhpC active site cysteine residues and for the regeneration of the AhpC enzyme activity. In Coxiella burnetii (strain CbuG_Q212) (Coxiella burnetii (strain Q212)), this protein is Alkyl hydroperoxide reductase AhpD.